A 397-amino-acid chain; its full sequence is Elongation factor Tu (397 aa).

The 198-residue stretch at 10–207 folds into the tr-type G domain; it reads LPHVNVGTIG…TLDSYIPEPV (198 aa). Residues 19–26 are G1; that stretch reads GHVDHGKT. Position 19 to 26 (19 to 26) interacts with GTP; sequence GHVDHGKT. Mg(2+) is bound at residue threonine 26. The interval 60–64 is G2; that stretch reads GITIN. The segment at 81-84 is G3; sequence DCPG. Residues 81–85 and 136–139 contribute to the GTP site; these read DCPGH and NKAD. Positions 136–139 are G4; it reads NKAD. The tract at residues 174–176 is G5; the sequence is SAR.

This sequence belongs to the TRAFAC class translation factor GTPase superfamily. Classic translation factor GTPase family. EF-Tu/EF-1A subfamily. In terms of assembly, monomer.

It localises to the cytoplasm. It catalyses the reaction GTP + H2O = GDP + phosphate + H(+). Its function is as follows. GTP hydrolase that promotes the GTP-dependent binding of aminoacyl-tRNA to the A-site of ribosomes during protein biosynthesis. This Pseudomonas syringae pv. syringae (strain B728a) protein is Elongation factor Tu.